The chain runs to 175 residues: Adenine phosphoribosyltransferase (175 aa).

It belongs to the purine/pyrimidine phosphoribosyltransferase family. In terms of assembly, homodimer.

Its subcellular location is the cytoplasm. It catalyses the reaction AMP + diphosphate = 5-phospho-alpha-D-ribose 1-diphosphate + adenine. Its pathway is purine metabolism; AMP biosynthesis via salvage pathway; AMP from adenine: step 1/1. Functionally, catalyzes a salvage reaction resulting in the formation of AMP, that is energically less costly than de novo synthesis. In Francisella philomiragia subsp. philomiragia (strain ATCC 25017 / CCUG 19701 / FSC 153 / O#319-036), this protein is Adenine phosphoribosyltransferase.